A 455-amino-acid polypeptide reads, in one-letter code: tRNA modification GTPase MnmE (455 aa).

(6S)-5-formyl-5,6,7,8-tetrahydrofolate-binding residues include K29, E91, and R131. The 153-residue stretch at 226–378 folds into the TrmE-type G domain; the sequence is GLKVALVGLP…LIQELLKLAG (153 aa). Position 236 (N236) interacts with K(+). GTP contacts are provided by residues 236 to 241, 255 to 261, 280 to 283, and 341 to 344; these read NVGKSS, TDLPGTT, DTAG, and NKAD. S240 contributes to the Mg(2+) binding site. Residues T255, L257, and T260 each coordinate K(+). Residue T261 coordinates Mg(2+). Residue K455 coordinates (6S)-5-formyl-5,6,7,8-tetrahydrofolate.

Belongs to the TRAFAC class TrmE-Era-EngA-EngB-Septin-like GTPase superfamily. TrmE GTPase family. Homodimer. Heterotetramer of two MnmE and two MnmG subunits. K(+) is required as a cofactor.

The protein resides in the cytoplasm. Exhibits a very high intrinsic GTPase hydrolysis rate. Involved in the addition of a carboxymethylaminomethyl (cmnm) group at the wobble position (U34) of certain tRNAs, forming tRNA-cmnm(5)s(2)U34. In Prochlorococcus marinus (strain SARG / CCMP1375 / SS120), this protein is tRNA modification GTPase MnmE.